The following is a 549-amino-acid chain: Eukaryotic translation initiation factor 4B2 (549 aa).

2 disordered regions span residues 1–446 (MSKP…DLIR) and 465–549 (FRPR…REGW). A compositionally biased stretch (low complexity) spans 24–46 (AEATATAADSQSFPSLKEAATAK). Gly residues-rich tracts occupy residues 96–109 (RLGG…GGRS) and 126–136 (SWGGGGGGRRS). Residues 169–176 (GKKSLPSF) carry the Nuclear localization signal 1 motif. Residues 184-218 (RYGGGGGSFGGGGGGGAGSYGGGGAGAGSGGGGGF) show a composition bias toward gly residues. The Nuclear localization signal 2 motif lies at 234–241 (SSTFGSGF). The segment covering 263–278 (QEERRRLVFEPRKADT) has biased composition (basic and acidic residues). Residues 281-292 (SETPTAVKTSKP) show a composition bias toward polar residues. Basic and acidic residues predominate over residues 299 to 323 (RPREQVLAEKGLDWKKLDSDIEAKK). The segment covering 327-349 (SRPSSAQSSRPSSAQSNRSESSA) has biased composition (low complexity). 3 stretches are compositionally biased toward basic and acidic residues: residues 369–431 (AKPR…KESQ), 485–507 (ERPH…ERPR), and 518–549 (PVDD…REGW).

The protein belongs to the eIF-4 subunit B family. As to quaternary structure, homodimer. Nonspherical monomer. mRNA-discriminating component of initiation complexes. In terms of processing, phosphorylated.

The protein localises to the nucleus. Promotes the eIF4F and eIF4A RNA-dependent ATP-hydrolysis activity with different efficiency depending on mRNAs, thus providing mRNA discrimination during initiation of translation. This is Eukaryotic translation initiation factor 4B2 from Arabidopsis thaliana (Mouse-ear cress).